A 200-amino-acid polypeptide reads, in one-letter code: Holliday junction branch migration complex subunit RuvA (200 aa).

Residues 1 to 64 form a domain I region; it reads MYAYFRGELI…EDLMQLYGFI (64 aa). Positions 65 to 143 are domain II; it reads EEEERQLFLL…KLQQTRPGKT (79 aa). The interval 144–154 is flexible linker; that stretch reads AGAGSVASLSE. The segment at 154 to 200 is domain III; that stretch reads EDALQALMTLGFSRASAQQAVTRALLSAENPGVEDIVREALQNIRNH.

It belongs to the RuvA family. Homotetramer. Forms an RuvA(8)-RuvB(12)-Holliday junction (HJ) complex. HJ DNA is sandwiched between 2 RuvA tetramers; dsDNA enters through RuvA and exits via RuvB. An RuvB hexamer assembles on each DNA strand where it exits the tetramer. Each RuvB hexamer is contacted by two RuvA subunits (via domain III) on 2 adjacent RuvB subunits; this complex drives branch migration. In the full resolvosome a probable DNA-RuvA(4)-RuvB(12)-RuvC(2) complex forms which resolves the HJ.

It is found in the cytoplasm. Its function is as follows. The RuvA-RuvB-RuvC complex processes Holliday junction (HJ) DNA during genetic recombination and DNA repair, while the RuvA-RuvB complex plays an important role in the rescue of blocked DNA replication forks via replication fork reversal (RFR). RuvA specifically binds to HJ cruciform DNA, conferring on it an open structure. The RuvB hexamer acts as an ATP-dependent pump, pulling dsDNA into and through the RuvAB complex. HJ branch migration allows RuvC to scan DNA until it finds its consensus sequence, where it cleaves and resolves the cruciform DNA. In Prosthecochloris aestuarii (strain DSM 271 / SK 413), this protein is Holliday junction branch migration complex subunit RuvA.